The chain runs to 210 residues: Peptidyl-tRNA hydrolase (210 aa).

Tyrosine 14 lines the tRNA pocket. Residue histidine 19 is the Proton acceptor of the active site. Phenylalanine 64, asparagine 66, and asparagine 112 together coordinate tRNA.

The protein belongs to the PTH family. In terms of assembly, monomer.

The protein localises to the cytoplasm. The enzyme catalyses an N-acyl-L-alpha-aminoacyl-tRNA + H2O = an N-acyl-L-amino acid + a tRNA + H(+). Its function is as follows. Hydrolyzes ribosome-free peptidyl-tRNAs (with 1 or more amino acids incorporated), which drop off the ribosome during protein synthesis, or as a result of ribosome stalling. In terms of biological role, catalyzes the release of premature peptidyl moieties from peptidyl-tRNA molecules trapped in stalled 50S ribosomal subunits, and thus maintains levels of free tRNAs and 50S ribosomes. The chain is Peptidyl-tRNA hydrolase from Methylorubrum populi (strain ATCC BAA-705 / NCIMB 13946 / BJ001) (Methylobacterium populi).